A 215-amino-acid polypeptide reads, in one-letter code: Adenylate kinase (215 aa).

Position 10 to 15 (10 to 15 (GCGKGT)) interacts with ATP. The interval 30–59 (STGDIFRQTIDQKGPYWEELKSYISKGLLV) is NMP. Residues T31, R36, 57 to 59 (LLV), and Q91 each bind AMP. An LID region spans residues 120–157 (GRRICSKCKRIYNIHYSAPKKEDICDDDGEFLIQRKDD). ATP is bound at residue R121. Zn(2+)-binding residues include C124 and C127. 130–131 (IY) provides a ligand contact to ATP. Zn(2+) is bound by residues C144 and D147. The AMP site is built by R154 and R165.

It belongs to the adenylate kinase family. In terms of assembly, monomer.

The protein localises to the cytoplasm. The enzyme catalyses AMP + ATP = 2 ADP. It functions in the pathway purine metabolism; AMP biosynthesis via salvage pathway; AMP from ADP: step 1/1. In terms of biological role, catalyzes the reversible transfer of the terminal phosphate group between ATP and AMP. Plays an important role in cellular energy homeostasis and in adenine nucleotide metabolism. The polypeptide is Adenylate kinase (Malacoplasma penetrans (strain HF-2) (Mycoplasma penetrans)).